The primary structure comprises 189 residues: GTP cyclohydrolase 1 (189 aa).

Zn(2+)-binding residues include cysteine 79, histidine 82, and cysteine 150.

Belongs to the GTP cyclohydrolase I family. As to quaternary structure, homomer.

It carries out the reaction GTP + H2O = 7,8-dihydroneopterin 3'-triphosphate + formate + H(+). It participates in cofactor biosynthesis; 7,8-dihydroneopterin triphosphate biosynthesis; 7,8-dihydroneopterin triphosphate from GTP: step 1/1. This chain is GTP cyclohydrolase 1, found in Rickettsia africae (strain ESF-5).